A 358-amino-acid chain; its full sequence is Peroxidase 12 (358 aa).

The signal sequence occupies residues 1–31 (MTKAYSTRVLTFLILISLMAVTLNLFPTVEA). 4 disulfide bridges follow: C53/C134, C86/C91, C140/C335, and C220/C247. The Proton acceptor role is filled by H84. 5 residues coordinate Ca(2+): D85, V88, G90, E92, and S94. P183 serves as a coordination point for substrate. 2 N-linked (GlcNAc...) asparagine glycosylation sites follow: N188 and N202. Position 213 (H213) interacts with heme b. Residue T214 participates in Ca(2+) binding. N251 carries an N-linked (GlcNAc...) asparagine glycan. 3 residues coordinate Ca(2+): D259, S262, and D267. N-linked (GlcNAc...) asparagine glycosylation occurs at N334.

It belongs to the peroxidase family. Classical plant (class III) peroxidase subfamily. Requires heme b as cofactor. The cofactor is Ca(2+). Expressed in roots and leaves.

It localises to the secreted. It is found in the vacuole. It carries out the reaction 2 a phenolic donor + H2O2 = 2 a phenolic radical donor + 2 H2O. Functionally, removal of H(2)O(2), oxidation of toxic reductants, biosynthesis and degradation of lignin, suberization, auxin catabolism, response to environmental stresses such as wounding, pathogen attack and oxidative stress. These functions might be dependent on each isozyme/isoform in each plant tissue. Exhibits a Ca(2+)-pectate binding affinity which could be interpreted in vivo as a specificity to interact with the pectic structure of the cell wall. This is Peroxidase 12 (PER12) from Arabidopsis thaliana (Mouse-ear cress).